A 278-amino-acid chain; its full sequence is Thiazole synthase (278 aa).

K109 acts as the Schiff-base intermediate with DXP in catalysis. 1-deoxy-D-xylulose 5-phosphate-binding positions include G170, 197–198 (AG), and 219–220 (NT).

Belongs to the ThiG family. Homotetramer. Forms heterodimers with either ThiH or ThiS.

It is found in the cytoplasm. The enzyme catalyses [ThiS sulfur-carrier protein]-C-terminal-Gly-aminoethanethioate + 2-iminoacetate + 1-deoxy-D-xylulose 5-phosphate = [ThiS sulfur-carrier protein]-C-terminal Gly-Gly + 2-[(2R,5Z)-2-carboxy-4-methylthiazol-5(2H)-ylidene]ethyl phosphate + 2 H2O + H(+). The protein operates within cofactor biosynthesis; thiamine diphosphate biosynthesis. Its function is as follows. Catalyzes the rearrangement of 1-deoxy-D-xylulose 5-phosphate (DXP) to produce the thiazole phosphate moiety of thiamine. Sulfur is provided by the thiocarboxylate moiety of the carrier protein ThiS. In vitro, sulfur can be provided by H(2)S. This is Thiazole synthase from Cupriavidus pinatubonensis (strain JMP 134 / LMG 1197) (Cupriavidus necator (strain JMP 134)).